The following is a 341-amino-acid chain: Homeobox protein knotted-1-like 8 (341 aa).

Low complexity predominate over residues Met-1–Ala-17. 3 disordered regions span residues Met-1 to Gly-72, Ala-121 to Asp-148, and Ala-187 to Gln-207. The segment covering Ala-187–Ser-196 has biased composition (polar residues). An ELK domain is found at Gln-207–Phe-227. Positions Ser-228 to Thr-291 form a DNA-binding region, homeobox; TALE-type.

This sequence belongs to the TALE/KNOX homeobox family.

It is found in the nucleus. In terms of biological role, probable transcription factor that may be involved in shoot formation during embryogenesis. The polypeptide is Homeobox protein knotted-1-like 8 (OSH43) (Oryza sativa subsp. japonica (Rice)).